Consider the following 375-residue polypeptide: Tyrosine--tRNA ligase (375 aa).

Tyr-37, Tyr-168, Gln-172, Asp-175, and Gln-190 together coordinate L-tyrosine. The 'KMSKS' region signature appears at 251-255 (KMSKS). Residue Lys-254 participates in ATP binding.

The protein belongs to the class-I aminoacyl-tRNA synthetase family. TyrS type 4 subfamily. Homodimer.

The protein localises to the cytoplasm. It catalyses the reaction tRNA(Tyr) + L-tyrosine + ATP = L-tyrosyl-tRNA(Tyr) + AMP + diphosphate + H(+). Its function is as follows. Catalyzes the attachment of tyrosine to tRNA(Tyr) in a two-step reaction: tyrosine is first activated by ATP to form Tyr-AMP and then transferred to the acceptor end of tRNA(Tyr). In Pyrococcus abyssi (strain GE5 / Orsay), this protein is Tyrosine--tRNA ligase.